The sequence spans 105 residues: Small ribosomal subunit protein uS10 (105 aa).

Belongs to the universal ribosomal protein uS10 family. As to quaternary structure, part of the 30S ribosomal subunit.

Functionally, involved in the binding of tRNA to the ribosomes. In Rickettsia typhi (strain ATCC VR-144 / Wilmington), this protein is Small ribosomal subunit protein uS10.